Reading from the N-terminus, the 198-residue chain is Adenylyl-sulfate kinase (198 aa).

31–38 (GLSGAGKS) is an ATP binding site. Serine 105 (phosphoserine intermediate) is an active-site residue.

The protein belongs to the APS kinase family.

It catalyses the reaction adenosine 5'-phosphosulfate + ATP = 3'-phosphoadenylyl sulfate + ADP + H(+). Its pathway is sulfur metabolism; hydrogen sulfide biosynthesis; sulfite from sulfate: step 2/3. Catalyzes the synthesis of activated sulfate. In Shewanella amazonensis (strain ATCC BAA-1098 / SB2B), this protein is Adenylyl-sulfate kinase.